We begin with the raw amino-acid sequence, 2766 residues long: PDZ domain-containing protein 2 (2766 aa).

The 93-residue stretch at 85–177 (LSFGNIPVFG…GGFIYLIMLR (93 aa)) folds into the PDZ 1 domain. 2 disordered regions span residues 189–315 (GNSG…KTGK) and 419–452 (MPGS…KLKS). Residues 242-254 (TADDPNSELENGA) show a composition bias toward acidic residues. Residues 280 to 296 (HLERSEADSEVELRVPK) show a composition bias toward basic and acidic residues. Residues 334–419 (KMELLKESDG…MVQLVVASKM (86 aa)) enclose the PDZ 2 domain. Position 517 is a phosphoserine (S517). The PDZ 3 domain maps to 535-621 (IIGLYKEKGK…GLFVLTVRTK (87 aa)). Over residues 627 to 636 (LTPCSTPTHM) the composition is skewed to polar residues. The tract at residues 627 to 673 (LTPCSTPTHMSRSSSPSFNTNSGGTPAGGGQEEGGSSSLGRKAPGPK) is disordered. Residues 637 to 650 (SRSSSPSFNTNSGG) show a composition bias toward low complexity. Residues 679 to 764 (EVTLNKEPRV…GPVRLVIGRH (86 aa)) enclose the PDZ 4 domain. Residues 783-794 (YQESREANSSPG) show a composition bias toward polar residues. 2 disordered regions span residues 783–803 (YQES…KSPS) and 834–853 (AGSE…EDGS). Phosphoserine occurs at positions 891 and 895. Disordered stretches follow at residues 915-966 (NGGS…KQEE), 990-1425 (HSIL…PSVL), 1456-1531 (ISLS…CPGT), 1725-1909 (DSQG…LPEQ), 1924-1967 (DTSC…IRQS), 2015-2070 (ERVP…ASQV), 2146-2174 (FSSH…AMGG), 2262-2397 (DRPT…ERRT), 2424-2450 (QLEI…GHAD), and 2465-2496 (TRAY…WATP). Residues 918-927 (SDDEDFDGEG) show a composition bias toward acidic residues. A compositionally biased stretch (basic and acidic residues) spans 1021 to 1038 (GRKEMSGSRSSPKLEYRV). Composition is skewed to polar residues over residues 1040 to 1061 (TDTQ…SENL), 1126 to 1137 (PGDSSVPTNCGP), and 1189 to 1220 (SETP…SQGI). 2 stretches are compositionally biased toward low complexity: residues 1379–1393 (SQPP…SHHA) and 1456–1471 (ISLS…SPSS). S1767 is modified (phosphoserine). Over residues 1797–1806 (CSPKLKRLNS) the composition is skewed to basic residues. Residues 1884-1901 (LRTSASDTSIRTFTSPLT) show a composition bias toward polar residues. 2 stretches are compositionally biased toward low complexity: residues 1924–1937 (DTSC…PRSG) and 1947–1963 (SGSA…ALAG). 2 stretches are compositionally biased toward low complexity: residues 2280 to 2296 (PPIN…GSPS) and 2305 to 2321 (RSLS…SSLL). Composition is skewed to polar residues over residues 2322–2347 (PQMT…SNKG) and 2362–2372 (PTSTVSPASPS). The region spanning 2550–2634 (FIVLNKKEGS…HKHALMIIKK (85 aa)) is the PDZ 5 domain. A disordered region spans residues 2635-2667 (GNDQPGPSFKQEPPSANGKGPFPRRTLPLEPGA). One can recognise a PDZ 6 domain in the interval 2678 to 2763 (CVEVLKTSAG…GPVQLVIRKH (86 aa)).

Interacts with SCN10A, CTNND2 and PKP4. In terms of processing, a secreted form is produced by caspase-mediated proteolytic cleavage. Expressed in the heart, liver, brain, spleen, lung, kidney, testis and skeletal muscle.

It localises to the nucleus. It is found in the cytoplasm. Its subcellular location is the endoplasmic reticulum. The protein localises to the cell junction. The protein resides in the secreted. This Rattus norvegicus (Rat) protein is PDZ domain-containing protein 2 (Pdzd2).